A 381-amino-acid chain; its full sequence is Probable tRNA sulfurtransferase (381 aa).

Positions 52-155 (LTNLDALKYV…DASTYIFIDY (104 aa)) constitute a THUMP domain. ATP is bound by residues 173-174 (LM), 198-199 (NF), R255, G277, and Q286.

It belongs to the ThiI family.

It is found in the cytoplasm. The catalysed reaction is [ThiI sulfur-carrier protein]-S-sulfanyl-L-cysteine + a uridine in tRNA + 2 reduced [2Fe-2S]-[ferredoxin] + ATP + H(+) = [ThiI sulfur-carrier protein]-L-cysteine + a 4-thiouridine in tRNA + 2 oxidized [2Fe-2S]-[ferredoxin] + AMP + diphosphate. The enzyme catalyses [ThiS sulfur-carrier protein]-C-terminal Gly-Gly-AMP + S-sulfanyl-L-cysteinyl-[cysteine desulfurase] + AH2 = [ThiS sulfur-carrier protein]-C-terminal-Gly-aminoethanethioate + L-cysteinyl-[cysteine desulfurase] + A + AMP + 2 H(+). It functions in the pathway cofactor biosynthesis; thiamine diphosphate biosynthesis. Catalyzes the ATP-dependent transfer of a sulfur to tRNA to produce 4-thiouridine in position 8 of tRNAs, which functions as a near-UV photosensor. Also catalyzes the transfer of sulfur to the sulfur carrier protein ThiS, forming ThiS-thiocarboxylate. This is a step in the synthesis of thiazole, in the thiamine biosynthesis pathway. The sulfur is donated as persulfide by IscS. This is Probable tRNA sulfurtransferase from Metamycoplasma arthritidis (strain 158L3-1) (Mycoplasma arthritidis).